The following is a 970-amino-acid chain: Sodium/calcium exchanger 1 (970 aa).

The N-terminal stretch at 1–32 (MLRLRLSPTFSVGFHLLAFVPLLFSHVDLISA) is a signal peptide. The Extracellular segment spans residues 33 to 71 (DTEMEGEGNETGECTGSYYCKKGVILPIWEPQDPSFGDK). Asn41 is a glycosylation site (N-linked (GlcNAc...) asparagine). A helical membrane pass occupies residues 72-92 (IARATVYFVAMVYMFLGVSII). Residues 93–133 (ADRFMSSIEVITSQEKEITIKKPNGETTKTTVRIWNETVSN) lie on the Cytoplasmic side of the membrane. A helical membrane pass occupies residues 134 to 154 (LTLMALGSSAPEILLSVIEVC). The stretch at 138–178 (ALGSSAPEILLSVIEVCGHNFTAGDLGPSTIVGSAAFNMFI) is one Alpha-1 repeat. The Extracellular portion of the chain corresponds to 155–167 (GHNFTAGDLGPST). A glycan (N-linked (GlcNAc...) asparagine) is linked at Asn157. The helical transmembrane segment at 168–188 (IVGSAAFNMFIIIALCVYVVP) threads the bilayer. Topologically, residues 189–201 (DGETRKIKHLRVF) are cytoplasmic. The helical transmembrane segment at 202–222 (FVTAAWSIFAYTWLYIILSVI) threads the bilayer. At 223–228 (SPGVVE) the chain is on the extracellular side. Residues 229-249 (VWEGLLTFFFFPICVVFAWVA) traverse the membrane as a helical segment. The Cytoplasmic segment spans residues 250–797 (DRRLLFYKYV…FVPPTEYWNG (548 aa)). The tract at residues 251–270 (RRLLFYKYVYKRYRAGKQRG) is putative calmodulin-binding region. Phosphoserine is present on residues Ser282 and Ser389. 2 consecutive Calx-beta domains span residues 393 to 493 (VNTE…VHLS) and 524 to 624 (ATVT…LEIG). 16 residues coordinate Ca(2+): Glu417, Asp453, Asp478, Asp479, Ile481, Glu483, Glu486, Asp530, Asp531, Asp532, Glu548, Asp584, Asp610, Glu611, Glu612, and Glu715. Residues 798–818 (WACFIVSILMIGILTAFIGDL) form a helical membrane-spanning segment. Topologically, residues 819–821 (ASH) are extracellular. Residues 822-842 (FGCTIGLKDSVTAVVFVALGT) form a helical membrane-spanning segment. One copy of the Alpha-2 repeat lies at 839–875 (ALGTSVPDTFASKVAATQDQYADASIGNVTGSNAVNV). Topologically, residues 843-871 (SVPDTFASKVAATQDQYADASIGNVTGSN) are cytoplasmic. A helical membrane pass occupies residues 872–892 (AVNVFLGIGVAWSIAAIYHAA). Residues 893 to 903 (NGEQFKVSPGT) lie on the Extracellular side of the membrane. A helical transmembrane segment spans residues 904–924 (LAFSVTLFTIFAFINVGVLLY). Over 925–941 (RRRPEIGGELGGPRTAK) the chain is Cytoplasmic. Residues 942–962 (LLTSCLFVLLWLLYIFFSSLE) traverse the membrane as a helical segment. The Extracellular segment spans residues 963 to 970 (AYCHIKGF).

The protein belongs to the Ca(2+):cation antiporter (CaCA) (TC 2.A.19) family. SLC8 subfamily. In terms of tissue distribution, detected in heart (at protein level). Detected in heart.

It localises to the cell membrane. It catalyses the reaction Ca(2+)(in) + 3 Na(+)(out) = Ca(2+)(out) + 3 Na(+)(in). Activated by micromolar levels of Ca(2+). Mediates the exchange of one Ca(2+) ion against three to four Na(+) ions across the cell membrane, and thereby contributes to the regulation of cytoplasmic Ca(2+) levels and Ca(2+)-dependent cellular processes. Contributes to Ca(2+) transport during excitation-contraction coupling in muscle. In a first phase, voltage-gated channels mediate the rapid increase of cytoplasmic Ca(2+) levels due to release of Ca(2+) stores from the endoplasmic reticulum. SLC8A1 mediates the export of Ca(2+) from the cell during the next phase, so that cytoplasmic Ca(2+) levels rapidly return to baseline. Required for normal embryonic heart development and the onset of heart contractions. In Felis catus (Cat), this protein is Sodium/calcium exchanger 1 (SLC8A1).